Consider the following 364-residue polypeptide: Putative glutamate--cysteine ligase 2-2 (364 aa).

Belongs to the glutamate--cysteine ligase type 2 family. YbdK subfamily.

The catalysed reaction is L-cysteine + L-glutamate + ATP = gamma-L-glutamyl-L-cysteine + ADP + phosphate + H(+). In terms of biological role, ATP-dependent carboxylate-amine ligase which exhibits weak glutamate--cysteine ligase activity. The sequence is that of Putative glutamate--cysteine ligase 2-2 from Mycobacterium sp. (strain JLS).